The following is a 363-amino-acid chain: NAD(P)H-quinone oxidoreductase subunit 1, chloroplastic (363 aa).

6 helical membrane passes run 28 to 48, 98 to 118, 127 to 147, 248 to 268, 300 to 320, and 343 to 363; these read WVLV…LVIV, FSIG…VIPF, LPIG…GLLM, YSGI…LVSS, VFGM…FLFI, and FLLP…LFSL.

Belongs to the complex I subunit 1 family. NDH is composed of at least 16 different subunits, 5 of which are encoded in the nucleus.

It localises to the plastid. It is found in the chloroplast thylakoid membrane. The catalysed reaction is a plastoquinone + NADH + (n+1) H(+)(in) = a plastoquinol + NAD(+) + n H(+)(out). It carries out the reaction a plastoquinone + NADPH + (n+1) H(+)(in) = a plastoquinol + NADP(+) + n H(+)(out). Functionally, NDH shuttles electrons from NAD(P)H:plastoquinone, via FMN and iron-sulfur (Fe-S) centers, to quinones in the photosynthetic chain and possibly in a chloroplast respiratory chain. The immediate electron acceptor for the enzyme in this species is believed to be plastoquinone. Couples the redox reaction to proton translocation, and thus conserves the redox energy in a proton gradient. This Cucumis sativus (Cucumber) protein is NAD(P)H-quinone oxidoreductase subunit 1, chloroplastic.